A 395-amino-acid chain; its full sequence is Phosphoglycerate kinase (395 aa).

Residues 21-23 (DFN), Arg36, 59-62 (HLGR), Arg120, and Arg153 each bind substrate. ATP-binding positions include Lys203, Glu325, and 351–354 (GGDS).

The protein belongs to the phosphoglycerate kinase family. Monomer.

Its subcellular location is the cytoplasm. The catalysed reaction is (2R)-3-phosphoglycerate + ATP = (2R)-3-phospho-glyceroyl phosphate + ADP. Its pathway is carbohydrate degradation; glycolysis; pyruvate from D-glyceraldehyde 3-phosphate: step 2/5. This chain is Phosphoglycerate kinase, found in Roseiflexus sp. (strain RS-1).